Reading from the N-terminus, the 329-residue chain is Beta-ketoacyl-[acyl-carrier-protein] synthase III (329 aa).

Active-site residues include cysteine 113 and histidine 255. An ACP-binding region spans residues 256–260; the sequence is QANQR. The active site involves asparagine 285.

The protein belongs to the thiolase-like superfamily. FabH family. Homodimer.

Its subcellular location is the cytoplasm. The catalysed reaction is malonyl-[ACP] + acetyl-CoA + H(+) = 3-oxobutanoyl-[ACP] + CO2 + CoA. Its pathway is lipid metabolism; fatty acid biosynthesis. Functionally, catalyzes the condensation reaction of fatty acid synthesis by the addition to an acyl acceptor of two carbons from malonyl-ACP. Catalyzes the first condensation reaction which initiates fatty acid synthesis and may therefore play a role in governing the total rate of fatty acid production. Possesses both acetoacetyl-ACP synthase and acetyl transacylase activities. Its substrate specificity determines the biosynthesis of branched-chain and/or straight-chain of fatty acids. This Chlorobium phaeobacteroides (strain DSM 266 / SMG 266 / 2430) protein is Beta-ketoacyl-[acyl-carrier-protein] synthase III.